Consider the following 325-residue polypeptide: 4-hydroxy-3-methylbut-2-enyl diphosphate reductase (325 aa).

Position 21 (cysteine 21) interacts with [4Fe-4S] cluster. The (2E)-4-hydroxy-3-methylbut-2-enyl diphosphate site is built by histidine 50 and histidine 83. The dimethylallyl diphosphate site is built by histidine 50 and histidine 83. Histidine 50 and histidine 83 together coordinate isopentenyl diphosphate. Cysteine 105 is a binding site for [4Fe-4S] cluster. Histidine 133 is a binding site for (2E)-4-hydroxy-3-methylbut-2-enyl diphosphate. Histidine 133 provides a ligand contact to dimethylallyl diphosphate. Histidine 133 contributes to the isopentenyl diphosphate binding site. Catalysis depends on glutamate 135, which acts as the Proton donor. Threonine 173 contributes to the (2E)-4-hydroxy-3-methylbut-2-enyl diphosphate binding site. Position 203 (cysteine 203) interacts with [4Fe-4S] cluster. (2E)-4-hydroxy-3-methylbut-2-enyl diphosphate contacts are provided by serine 231, serine 232, asparagine 233, and serine 275. Serine 231, serine 232, asparagine 233, and serine 275 together coordinate dimethylallyl diphosphate. 4 residues coordinate isopentenyl diphosphate: serine 231, serine 232, asparagine 233, and serine 275.

Belongs to the IspH family. It depends on [4Fe-4S] cluster as a cofactor.

The catalysed reaction is isopentenyl diphosphate + 2 oxidized [2Fe-2S]-[ferredoxin] + H2O = (2E)-4-hydroxy-3-methylbut-2-enyl diphosphate + 2 reduced [2Fe-2S]-[ferredoxin] + 2 H(+). It carries out the reaction dimethylallyl diphosphate + 2 oxidized [2Fe-2S]-[ferredoxin] + H2O = (2E)-4-hydroxy-3-methylbut-2-enyl diphosphate + 2 reduced [2Fe-2S]-[ferredoxin] + 2 H(+). It functions in the pathway isoprenoid biosynthesis; dimethylallyl diphosphate biosynthesis; dimethylallyl diphosphate from (2E)-4-hydroxy-3-methylbutenyl diphosphate: step 1/1. It participates in isoprenoid biosynthesis; isopentenyl diphosphate biosynthesis via DXP pathway; isopentenyl diphosphate from 1-deoxy-D-xylulose 5-phosphate: step 6/6. Catalyzes the conversion of 1-hydroxy-2-methyl-2-(E)-butenyl 4-diphosphate (HMBPP) into a mixture of isopentenyl diphosphate (IPP) and dimethylallyl diphosphate (DMAPP). Acts in the terminal step of the DOXP/MEP pathway for isoprenoid precursor biosynthesis. The polypeptide is 4-hydroxy-3-methylbut-2-enyl diphosphate reductase (Bordetella pertussis (strain Tohama I / ATCC BAA-589 / NCTC 13251)).